Reading from the N-terminus, the 232-residue chain is Peptide deformylase (232 aa).

Fe cation contacts are provided by Cys135 and His178. The active site involves Glu179. His182 lines the Fe cation pocket.

It belongs to the polypeptide deformylase family. Fe(2+) is required as a cofactor.

It carries out the reaction N-terminal N-formyl-L-methionyl-[peptide] + H2O = N-terminal L-methionyl-[peptide] + formate. Its function is as follows. Removes the formyl group from the N-terminal Met of newly synthesized proteins. Requires at least a dipeptide for an efficient rate of reaction. N-terminal L-methionine is a prerequisite for activity but the enzyme has broad specificity at other positions. The chain is Peptide deformylase from Deinococcus radiodurans (strain ATCC 13939 / DSM 20539 / JCM 16871 / CCUG 27074 / LMG 4051 / NBRC 15346 / NCIMB 9279 / VKM B-1422 / R1).